The following is a 492-amino-acid chain: MIKLFNTLSKNIEVFKPIDEVVKIYCCGVTVYDLCHLGHARSYIAWDILRRFLIYSDYKVKYVQNFTDIDDKILKRAKEENSSMNEVSEKNITEFHKDMDALGIMRPDSMPKATNHICNICSFIKVLEDKGFAYIRGGDVYYSVFKNKNYGKLSNQNILEQNINQQGRITTDESNKKENPQDFALWKKAKDNEPSFDSPWGKGRPGWHIECSAMVKDELGETIDIHLGGSDLIFPHHENEIAQSESANNKKLANYWLHNGMVNVNGQKMSKSLKNFTTIRDLLDSGTSPMTLRYFVLTVNYRKPLDFTDEALKSASEAWKNINVALSLFDITKKENLSIEVNETNEFVEETYKDMINYEISQKKIKFTNALNNDLNTAGAIAIIYELAKPLKNFINQFQRIKNLEINTNEKFHLRETFKTLEELTDVLGLKKEEIIIDNRINEDQILSLINKRLGAKKEKDYAEADKIRNLLKEKGVELIDQSPELTTWVRI.

Cys-27 provides a ligand contact to Zn(2+). The short motif at 29 to 39 (VTVYDLCHLGH) is the 'HIGH' region element. Zn(2+) is bound by residues Cys-211, His-236, and Glu-240. The 'KMSKS' region motif lies at 268 to 272 (KMSKS). Lys-271 serves as a coordination point for ATP.

This sequence belongs to the class-I aminoacyl-tRNA synthetase family. Monomer. Zn(2+) serves as cofactor.

The protein resides in the cytoplasm. It catalyses the reaction tRNA(Cys) + L-cysteine + ATP = L-cysteinyl-tRNA(Cys) + AMP + diphosphate. The protein is Cysteine--tRNA ligase of Prochlorococcus marinus subsp. pastoris (strain CCMP1986 / NIES-2087 / MED4).